The following is a 744-amino-acid chain: Putative pre-mRNA-splicing factor ATP-dependent RNA helicase DHX32 (744 aa).

Methionine 1 bears the N-acetylmethionine mark. The interval 1–28 is disordered; it reads MDEEELDHPNASPEKRYFPESLDSSDGD. The region spanning 72-270 is the Helicase ATP-binding domain; it reads MESLLQNQVV…RLIFEIHRSG (199 aa). ATP is bound at residue 85–92; the sequence is GDSKCGKS. The DEAH box signature appears at 185 to 188; that stretch reads DDVH. The Helicase C-terminal domain occupies 258-438; the sequence is SVIRLIFEIH…SMVLFMKRVD (181 aa).

Belongs to the DEAD box helicase family. DEAH subfamily.

The protein localises to the nucleus. It localises to the mitochondrion. It catalyses the reaction ATP + H2O = ADP + phosphate + H(+). This is Putative pre-mRNA-splicing factor ATP-dependent RNA helicase DHX32 (Dhx32) from Mus musculus (Mouse).